Consider the following 301-residue polypeptide: 2-oxo-3-(phosphooxy)propyl 3-oxoalkanoate synthase (301 aa).

Belongs to the AfsA family.

It catalyses the reaction a medium-chain 3-oxoacyl-[ACP] + dihydroxyacetone phosphate = a (4-alkanoyl-5-oxo-2,5-dihydrofuran-3-yl)methyl phosphate + holo-[ACP] + H2O. Functionally, involved in the biosynthesis of A factor (2-isocapryloyl-3R-hydroxymethyl-gamma-butyrolactone), a gamma-butyrolactone autoregulator that triggers secondary metabolism and morphogenesis in Streptomyces. Catalyzes beta-ketoacyl transfer from 8-methyl-3-oxononanoyl-acyl carrier protein (ACP) to the hydroxyl group of dihydroxyacetone phosphate (DHAP), thus producing an 8-methyl-3-oxononanoyl-DHAP ester. The chain is 2-oxo-3-(phosphooxy)propyl 3-oxoalkanoate synthase from Streptomyces griseus.